A 387-amino-acid chain; its full sequence is Exodeoxyribonuclease 7 large subunit (387 aa).

The protein belongs to the XseA family. In terms of assembly, heterooligomer composed of large and small subunits.

Its subcellular location is the cytoplasm. It catalyses the reaction Exonucleolytic cleavage in either 5'- to 3'- or 3'- to 5'-direction to yield nucleoside 5'-phosphates.. Functionally, bidirectionally degrades single-stranded DNA into large acid-insoluble oligonucleotides, which are then degraded further into small acid-soluble oligonucleotides. The protein is Exodeoxyribonuclease 7 large subunit of Campylobacter jejuni subsp. doylei (strain ATCC BAA-1458 / RM4099 / 269.97).